A 518-amino-acid polypeptide reads, in one-letter code: Arginyl-tRNA--protein transferase 1 (518 aa).

Residues 149–165 (ESLQSEGKNSKKEEPHE) are compositionally biased toward basic and acidic residues. The interval 149–207 (ESLQSEGKNSKKEEPHELLQSQDSVGEKLGSGEPSHSVKVHTVPKPGKGADLSKPPCRK) is disordered. Position 169 is a phosphoserine (S169).

This sequence belongs to the R-transferase family. In terms of assembly, monomer. Interacts with LIAT1; LIAT1 is not a substrate of ATE1, the interaction takes place in the cytoplasm and seems to increase ATE1 arginyltransferase activity.

The protein localises to the nucleus. The protein resides in the cytoplasm. It catalyses the reaction an N-terminal L-alpha-aminoacyl-[protein] + L-arginyl-tRNA(Arg) = an N-terminal L-arginyl-L-aminoacyl-[protein] + tRNA(Arg) + H(+). In terms of biological role, involved in the post-translational conjugation of arginine to the N-terminal aspartate or glutamate of a protein. This arginylation is required for degradation of the protein via the ubiquitin pathway. Does not arginylate cysteine residues. The chain is Arginyl-tRNA--protein transferase 1 (ATE1) from Macaca fascicularis (Crab-eating macaque).